The sequence spans 313 residues: L-lactate dehydrogenase 1 (313 aa).

Val15, Asp36, Arg41, and Tyr66 together coordinate NAD(+). Substrate-binding positions include Gln83, Arg89, and 121–124; that span reads NPVD. NAD(+) is bound by residues 119 to 121 and Ser144; that span reads ASN. 149–152 serves as a coordination point for substrate; it reads DTAR. Residues Arg154 and His169 each coordinate beta-D-fructose 1,6-bisphosphate. His176 serves as the catalytic Proton acceptor. Tyr218 carries the post-translational modification Phosphotyrosine. Position 227 (Thr227) interacts with substrate.

The protein belongs to the LDH/MDH superfamily. LDH family. Homotetramer.

It localises to the cytoplasm. It carries out the reaction (S)-lactate + NAD(+) = pyruvate + NADH + H(+). Its pathway is fermentation; pyruvate fermentation to lactate; (S)-lactate from pyruvate: step 1/1. Its activity is regulated as follows. Allosterically activated by fructose 1,6-bisphosphate (FBP). Its function is as follows. Catalyzes the conversion of lactate to pyruvate. The sequence is that of L-lactate dehydrogenase 1 from Listeria monocytogenes serotype 4b (strain F2365).